A 490-amino-acid chain; its full sequence is (21S)-21-acetyl-1-hydroxy-apo-melianone synthase CYP88A164 (490 aa).

The helical transmembrane segment at 4-24 threads the bilayer; it reads DLLWLILAIVVGTYVVLFGFL. C438 provides a ligand contact to heme.

The protein belongs to the cytochrome P450 family. Requires heme as cofactor. In terms of tissue distribution, mainly expressed in petioles and, to a lower extent, in roots.

The protein resides in the membrane. It carries out the reaction (21S)-21-acetoxyl-apo-melianone + reduced [NADPH--hemoprotein reductase] + O2 = (21S)-21-acetyl-1-hydroxy-apo-melianone + oxidized [NADPH--hemoprotein reductase] + H2O + H(+). It functions in the pathway secondary metabolite biosynthesis; terpenoid biosynthesis. Monooxygenase involved in the biosynthesis of limonoids triterpene natural products such as azadirachtin, an antifeedant widely used as bioinsecticide, and possessing many medicinal applications including anti-tumoral, anti-malarial, anti-rheumatic, antibacterial, anti-inflammatory, anti-pyretic and diuretic effects. Catalyzes the conversion of (21S)-21-acetoxyl-apo-melianone to (21S)-21-acetyl-1-hydroxy-apo-melianone. This Melia azedarach (Chinaberry tree) protein is (21S)-21-acetyl-1-hydroxy-apo-melianone synthase CYP88A164.